An 88-amino-acid polypeptide reads, in one-letter code: Large ribosomal subunit protein bL27 (88 aa).

The interval 1 to 21 (MAHKKGASSSRNGRDSAAQRL) is disordered.

It belongs to the bacterial ribosomal protein bL27 family.

This chain is Large ribosomal subunit protein bL27, found in Mycobacterium sp. (strain MCS).